A 63-amino-acid polypeptide reads, in one-letter code: Large ribosomal subunit protein bL28 (63 aa).

It belongs to the bacterial ribosomal protein bL28 family.

In Kosmotoga olearia (strain ATCC BAA-1733 / DSM 21960 / TBF 19.5.1), this protein is Large ribosomal subunit protein bL28.